Reading from the N-terminus, the 325-residue chain is Thioredoxin reductase (325 aa).

FAD-binding positions include 10–13, 39–40, Gln44, Asn53, Val86, Cys143, Asp286, and 293–295; these read SGPS, IA, and RQA. An intrachain disulfide couples Cys140 to Cys143.

It belongs to the class-II pyridine nucleotide-disulfide oxidoreductase family. Homodimer. The cofactor is FAD.

It localises to the cytoplasm. It carries out the reaction [thioredoxin]-dithiol + NADP(+) = [thioredoxin]-disulfide + NADPH + H(+). In Pneumocystis carinii, this protein is Thioredoxin reductase (TRR1).